The chain runs to 644 residues: Uromodulin (644 aa).

The N-terminal stretch at 1 to 26 (MGQLLSLTWLLLVMVVTPWFTVAGAN) is a signal peptide. Positions 30-66 (EARRCSECHDNATCVLDGVVTTCSCQAGFTGDGLVCE) constitute an EGF-like 1 domain. Disulfide bonds link Cys-34-Cys-43, Cys-37-Cys-52, Cys-54-Cys-65, Cys-71-Cys-84, Cys-79-Cys-93, Cys-95-Cys-107, Cys-113-Cys-127, Cys-121-Cys-136, Cys-138-Cys-149, Cys-151-Cys-162, Cys-156-Cys-173, Cys-177-Cys-270, Cys-198-Cys-285, Cys-220-Cys-258, Cys-226-Cys-290, Cys-251-Cys-259, Cys-300-Cys-309, Cys-303-Cys-318, Cys-320-Cys-350, Cys-338-Cys-428, and Cys-369-Cys-392. Asn-40 carries N-linked (GlcNAc...) asparagine glycosylation. Residues 67–108 (DIDECATPWTHNCSNSICMNTLGSYECSCQDGFRLTPGLGCI) enclose the EGF-like 2; calcium-binding domain. A glycan (N-linked (GlcNAc...) asparagine) is linked at Asn-78. The EGF-like 3; calcium-binding domain occupies 109–150 (DVNECTEQGLSNCHSLATCVNTEGSYSCVCPKGYRGDGWYCE). The interval 151 to 174 (CSPGFCEPGLDCLPQGPSGKLVCQ) is beta hairpin. A D10C region spans residues 175–294 (DPCNVYETLT…CNLAYCTDPS (120 aa)). N-linked (GlcNAc...) asparagine glycosylation is present at Asn-235. An N-linked (GlcNAc...) asparagine glycan is attached at Asn-278. The EGF-like 4 domain maps to 295–326 (SVEGTCEECGVDEDCVSDNGRWRCQCKQDFNV). An N-linked (GlcNAc...) asparagine glycan is attached at Asn-325. The segment at 337–432 (ECEANEIKIS…RINFECSYPL (96 aa)) is ZP-N. The region spanning 337–592 (ECEANEIKIS…PTCSGTRYRS (256 aa)) is the ZP domain. N-linked (GlcNAc...) asparagine glycosylation is found at Asn-399 and Asn-450. The interval 433–456 (DMKVSLKTSLQPMVSALNISLGGT) is flexible ZP-N/ZP-C linker; important for secretion and polymerization into filaments. The interval 457–467 (GKFTVQMALFQ) is internal hydrophobic patch (IHP). Residues 457–592 (GKFTVQMALF…PTCSGTRYRS (136 aa)) form a ZP-C region. Disulfide bonds link Cys-509–Cys-569, Cys-530–Cys-585, and Cys-574–Cys-581. N-linked (GlcNAc...) asparagine glycosylation is present at Asn-516. Residues 589–592 (RYRS) form an essential for cleavage by HPN region. The external hydrophobic patch (EHP); regulates polymerization into filaments stretch occupies residues 601-609 (VLNLGPITR). Ser-615 carries the GPI-anchor amidated serine lipid modification. The propeptide at 616 to 644 (VSKAASSNLGFLSIWLLLFLSATLTLMVH) is removed in mature form.

Homodimer that then polymerizes into long filaments. The filaments can additionally assemble laterally to form a sheet. The filaments consist of a zigzag-shaped backbone with laterally protruding arms which interact with bacterial adhesin fimH. Two fimH molecules can bind to a single UMOD monomer. Post-translationally, N-glycosylated. In terms of processing, proteolytically cleaved at a conserved C-terminal proteolytic cleavage site to generate the secreted form found in urine. This cleavage is catalyzed by HPN. In terms of tissue distribution, expression restricted to the thick ascending limb of the loop of Henle (TALH).

It is found in the apical cell membrane. It localises to the basolateral cell membrane. The protein localises to the cell projection. The protein resides in the cilium membrane. Its subcellular location is the secreted. In terms of biological role, functions in biogenesis and organization of the apical membrane of epithelial cells of the thick ascending limb of Henle's loop (TALH), where it promotes formation of complex filamentous gel-like structure that may play a role in the water barrier permeability. May serve as a receptor for binding and endocytosis of cytokines (IL-1, IL-2) and TNF. Facilitates neutrophil migration across renal epithelia. In the urine, may contribute to colloid osmotic pressure, retards passage of positively charged electrolytes, and inhibits formation of liquid containing supersaturated salts and subsequent formation of salt crystals. Protects against urinary tract infections by binding to type 1 fimbriated E.coli. Binds to bacterial adhesin fimH which mediates the stable formation of bacterial aggregates, prevents the binding of E.coli to uroplakins UPK1A and UPK1B which act as urothelial receptors for type I fimbriae, and allows for pathogen clearance through micturation. Also promotes aggregation of other bacteria including K.pneumoniae, P.aeruginosa and S.mitis and so may also protect against other uropathogens. The polypeptide is Uromodulin (Umod) (Rattus norvegicus (Rat)).